We begin with the raw amino-acid sequence, 306 residues long: Homoserine kinase (306 aa).

Pro-95–Ala-105 serves as a coordination point for ATP.

Belongs to the GHMP kinase family. Homoserine kinase subfamily.

It is found in the cytoplasm. It carries out the reaction L-homoserine + ATP = O-phospho-L-homoserine + ADP + H(+). It functions in the pathway amino-acid biosynthesis; L-threonine biosynthesis; L-threonine from L-aspartate: step 4/5. In terms of biological role, catalyzes the ATP-dependent phosphorylation of L-homoserine to L-homoserine phosphate. The sequence is that of Homoserine kinase from Mycobacteroides abscessus (strain ATCC 19977 / DSM 44196 / CCUG 20993 / CIP 104536 / JCM 13569 / NCTC 13031 / TMC 1543 / L948) (Mycobacterium abscessus).